The following is a 231-amino-acid chain: Albumin-2 (231 aa).

Hemopexin repeat units lie at residues 4 to 55 (TGYI…FKSL), 62 to 112 (SYGV…FPFF), 118 to 166 (ENGI…FPCF), and 172 to 223 (ESGT…WPSL). Positions 8, 66, 122, and 176 each coordinate Ca(2+).

In terms of assembly, monomer and homodimer.

It localises to the cytoplasm. The protein localises to the cytosol. Functionally, may play a role in response to oxidative stress and polyamine biosynthesis. This Pisum sativum (Garden pea) protein is Albumin-2.